The primary structure comprises 572 residues: NADP-dependent malic enzyme (572 aa).

The residue at position 1 (methionine 1) is an N-acetylmethionine. Tyrosine 102 (proton donor) is an active-site residue. Arginine 155 is a binding site for NADP(+). Lysine 173 acts as the Proton acceptor in catalysis. Positions 245, 246, and 269 each coordinate a divalent metal cation. Residues aspartate 269 and 301-318 (GAGE…MAME) contribute to the NADP(+) site. Serine 336 carries the post-translational modification Phosphoserine. Residue asparagine 408 coordinates NADP(+).

Belongs to the malic enzymes family. As to quaternary structure, homotetramer. Mg(2+) serves as cofactor. It depends on Mn(2+) as a cofactor. In terms of tissue distribution, ubiquitous. Up-regulated by 3,5,3'-triiodo-L-thyronine in the liver, kidney and heart.

The protein resides in the cytoplasm. The enzyme catalyses (S)-malate + NADP(+) = pyruvate + CO2 + NADPH. The catalysed reaction is oxaloacetate + H(+) = pyruvate + CO2. Its function is as follows. Catalyzes the oxidative decarboxylation of (S)-malate in the presence of NADP(+) and divalent metal ions, and decarboxylation of oxaloacetate. The protein is NADP-dependent malic enzyme (Me1) of Rattus norvegicus (Rat).